A 383-amino-acid polypeptide reads, in one-letter code: BRISC and BRCA1-A complex member 2 (383 aa).

At M1 the chain carries N-acetylmethionine. At S2 the chain carries Phosphoserine. UEV-like stretches follow at residues 30–147 (DATN…TLLE) and 275–364 (IAAF…RAKA).

Belongs to the BABAM2 family. As to quaternary structure, component of the ARISC complex, at least composed of UIMC1/RAP80, ABRAXAS1, BRCC3/BRCC36, BABAM2 and BABAM1/NBA1. Component of the BRCA1-A complex, at least composed of BRCA1, BARD1, UIMC1/RAP80, ABRAXAS1, BRCC3/BRCC36, BABAM2 and BABAM1/NBA1. In the BRCA1-A complex, interacts directly with ABRAXAS1, BRCC3/BRCC36 and BABAM1/NBA1. Binds polyubiquitin. Component of the BRISC complex, at least composed of ABRAXAS2, BRCC3/BRCC36, BABAM2 and BABAM1/NBA1. Identified in a complex with SHMT2 and the other subunits of the BRISC complex. Component of the BRCA1/BRCA2 containing complex (BRCC), which also contains BRCA1, BRCA2, BARD1, BRCC3/BRCC36 and RAD51. BRCC is a ubiquitin E3 ligase complex that enhances cellular survival following DNA damage. May interact with FAS and TNFRSF1A. As to expression, expressed in all cell lines examined. Highly expressed in placenta.

It localises to the cytoplasm. The protein localises to the nucleus. Component of the BRCA1-A complex, a complex that specifically recognizes 'Lys-63'-linked ubiquitinated histones H2A and H2AX at DNA lesions sites, leading to target the BRCA1-BARD1 heterodimer to sites of DNA damage at double-strand breaks (DSBs). The BRCA1-A complex also possesses deubiquitinase activity that specifically removes 'Lys-63'-linked ubiquitin on histones H2A and H2AX. In the BRCA1-A complex, it acts as an adapter that bridges the interaction between BABAM1/NBA1 and the rest of the complex, thereby being required for the complex integrity and modulating the E3 ubiquitin ligase activity of the BRCA1-BARD1 heterodimer. Component of the BRISC complex, a multiprotein complex that specifically cleaves 'Lys-63'-linked ubiquitin in various substrates. Within the BRISC complex, acts as an adapter that bridges the interaction between BABAM1/NBA1 and the rest of the complex, thereby being required for the complex integrity. The BRISC complex is required for normal mitotic spindle assembly and microtubule attachment to kinetochores via its role in deubiquitinating NUMA1. The BRISC complex plays a role in interferon signaling via its role in the deubiquitination of the interferon receptor IFNAR1; deubiquitination increases IFNAR1 activity by enhancing its stability and cell surface expression. Down-regulates the response to bacterial lipopolysaccharide (LPS) via its role in IFNAR1 deubiquitination. May play a role in homeostasis or cellular differentiation in cells of neural, epithelial and germline origins. May also act as a death receptor-associated anti-apoptotic protein, which inhibits the mitochondrial apoptotic pathway. May regulate TNF-alpha signaling through its interactions with TNFRSF1A; however these effects may be indirect. This chain is BRISC and BRCA1-A complex member 2, found in Homo sapiens (Human).